Consider the following 220-residue polypeptide: Adenylate kinase (220 aa).

An ATP-binding site is contributed by 12-17 (GAGKGT). An NMP region spans residues 32–62 (STGDIFRDIVKKENDELGKKIKEIMEKGELV). AMP contacts are provided by residues Thr33, Arg38, 60–62 (ELV), 88–91 (GYPR), and Gln95. Residues 129-166 (SRRICPKCGRIYNMISLPPKEDELCDDCKVKLVQRDDD) are LID. ATP is bound at residue Arg130. Residues Cys133 and Cys136 each coordinate Zn(2+). 139-140 (IY) contributes to the ATP binding site. Zn(2+)-binding residues include Cys153 and Cys156. AMP is bound by residues Arg163 and Arg174. Residue Ile202 coordinates ATP.

It belongs to the adenylate kinase family. In terms of assembly, monomer.

The protein resides in the cytoplasm. It catalyses the reaction AMP + ATP = 2 ADP. It functions in the pathway purine metabolism; AMP biosynthesis via salvage pathway; AMP from ADP: step 1/1. In terms of biological role, catalyzes the reversible transfer of the terminal phosphate group between ATP and AMP. Plays an important role in cellular energy homeostasis and in adenine nucleotide metabolism. This Thermotoga neapolitana protein is Adenylate kinase.